The following is a 452-amino-acid chain: 3-phosphoshikimate 1-carboxyvinyltransferase (452 aa).

The segment covering 1-17 (MSHAAAAKPATARKSQA) has biased composition (low complexity). Residues 1 to 26 (MSHAAAAKPATARKSQALSGTARVPG) form a disordered region. Residues K28, S29, and R33 each coordinate 3-phosphoshikimate. K28 is a phosphoenolpyruvate binding site. The phosphoenolpyruvate site is built by G100 and R128. The 3-phosphoshikimate site is built by S174, Q176, D327, and K354. A phosphoenolpyruvate-binding site is contributed by Q176. The Proton acceptor role is filled by D327. Phosphoenolpyruvate contacts are provided by R358 and R409.

The protein belongs to the EPSP synthase family. In terms of assembly, monomer.

The protein localises to the cytoplasm. The catalysed reaction is 3-phosphoshikimate + phosphoenolpyruvate = 5-O-(1-carboxyvinyl)-3-phosphoshikimate + phosphate. It participates in metabolic intermediate biosynthesis; chorismate biosynthesis; chorismate from D-erythrose 4-phosphate and phosphoenolpyruvate: step 6/7. Functionally, catalyzes the transfer of the enolpyruvyl moiety of phosphoenolpyruvate (PEP) to the 5-hydroxyl of shikimate-3-phosphate (S3P) to produce enolpyruvyl shikimate-3-phosphate and inorganic phosphate. The chain is 3-phosphoshikimate 1-carboxyvinyltransferase from Mesorhizobium japonicum (strain LMG 29417 / CECT 9101 / MAFF 303099) (Mesorhizobium loti (strain MAFF 303099)).